The chain runs to 194 residues: Oligoribonuclease (194 aa).

Residues 11-174 (LIWIDLEMTG…SDVRDSIDEL (164 aa)) enclose the Exonuclease domain. Y132 is an active-site residue.

This sequence belongs to the oligoribonuclease family.

It localises to the cytoplasm. Its function is as follows. 3'-to-5' exoribonuclease specific for small oligoribonucleotides. This chain is Oligoribonuclease, found in Xanthomonas campestris pv. campestris (strain ATCC 33913 / DSM 3586 / NCPPB 528 / LMG 568 / P 25).